The following is a 107-amino-acid chain: IQ domain-containing protein F6 (107 aa).

In terms of domain architecture, IQ spans 42 to 71; sequence QEWAVVKVQAQVRMWQARRRFLQARQAACI.

The chain is IQ domain-containing protein F6 (IQCF6) from Homo sapiens (Human).